The chain runs to 259 residues: 4-hydroxy-tetrahydrodipicolinate reductase (259 aa).

Residues 9 to 14 (GAGGRM) and E35 each bind NAD(+). R36 provides a ligand contact to NADP(+). Residues 92 to 94 (GTT) and 116 to 119 (APNM) contribute to the NAD(+) site. H149 functions as the Proton donor/acceptor in the catalytic mechanism. H150 is a binding site for (S)-2,3,4,5-tetrahydrodipicolinate. K153 acts as the Proton donor in catalysis. Position 159 to 160 (159 to 160 (GT)) interacts with (S)-2,3,4,5-tetrahydrodipicolinate.

This sequence belongs to the DapB family.

The protein localises to the cytoplasm. It catalyses the reaction (S)-2,3,4,5-tetrahydrodipicolinate + NAD(+) + H2O = (2S,4S)-4-hydroxy-2,3,4,5-tetrahydrodipicolinate + NADH + H(+). The enzyme catalyses (S)-2,3,4,5-tetrahydrodipicolinate + NADP(+) + H2O = (2S,4S)-4-hydroxy-2,3,4,5-tetrahydrodipicolinate + NADPH + H(+). It participates in amino-acid biosynthesis; L-lysine biosynthesis via DAP pathway; (S)-tetrahydrodipicolinate from L-aspartate: step 4/4. Catalyzes the conversion of 4-hydroxy-tetrahydrodipicolinate (HTPA) to tetrahydrodipicolinate. In Nitratidesulfovibrio vulgaris (strain DP4) (Desulfovibrio vulgaris), this protein is 4-hydroxy-tetrahydrodipicolinate reductase.